A 37-amino-acid chain; its full sequence is Beta-2-microglobulin (37 aa).

Positions 11–37 constitute an Ig-like C1-type domain; it reads GKEDVLICHVSNFHPPDITITLLKNGE.

It belongs to the beta-2-microglobulin family. In terms of assembly, heterodimer of an alpha chain and a beta chain. Beta-2-microglobulin is the beta-chain of major histocompatibility complex class I molecules.

Its subcellular location is the secreted. Functionally, component of the class I major histocompatibility complex (MHC). Involved in the presentation of peptide antigens to the immune system. This Oreochromis niloticus (Nile tilapia) protein is Beta-2-microglobulin (b2m).